The chain runs to 263 residues: 5'-nucleotidase SurE (263 aa).

A divalent metal cation contacts are provided by D10, D11, S41, and N95.

This sequence belongs to the SurE nucleotidase family. The cofactor is a divalent metal cation.

The protein resides in the cytoplasm. It catalyses the reaction a ribonucleoside 5'-phosphate + H2O = a ribonucleoside + phosphate. Functionally, nucleotidase that shows phosphatase activity on nucleoside 5'-monophosphates. This chain is 5'-nucleotidase SurE, found in Methanoculleus marisnigri (strain ATCC 35101 / DSM 1498 / JR1).